Consider the following 448-residue polypeptide: ATP-dependent protease ATPase subunit HslU (448 aa).

ATP contacts are provided by residues Ile-18, 60-65 (GVGKTE), Asp-261, Glu-326, and Arg-398.

This sequence belongs to the ClpX chaperone family. HslU subfamily. As to quaternary structure, a double ring-shaped homohexamer of HslV is capped on each side by a ring-shaped HslU homohexamer. The assembly of the HslU/HslV complex is dependent on binding of ATP.

The protein resides in the cytoplasm. In terms of biological role, ATPase subunit of a proteasome-like degradation complex; this subunit has chaperone activity. The binding of ATP and its subsequent hydrolysis by HslU are essential for unfolding of protein substrates subsequently hydrolyzed by HslV. HslU recognizes the N-terminal part of its protein substrates and unfolds these before they are guided to HslV for hydrolysis. The protein is ATP-dependent protease ATPase subunit HslU of Paraburkholderia xenovorans (strain LB400).